A 299-amino-acid chain; its full sequence is KATNB1-like protein 1 (299 aa).

A Nuclear localization signal motif is present at residues 8 to 15; the sequence is VKKRNFSN. Ser-56 is modified (phosphoserine).

Interacts with KATNA1 and KATNAL1; these interactions are competed by KATNB1 which has a higher affinity for them.

Its subcellular location is the nucleus. The protein resides in the cytoplasm. It is found in the cytoskeleton. The protein localises to the spindle pole. Regulates microtubule-severing activity of KATNAL1 in a concentration-dependent manner in vitro. This Mus musculus (Mouse) protein is KATNB1-like protein 1 (Katnbl1).